The chain runs to 103 residues: Large ribosomal subunit protein uL24 (103 aa).

The protein belongs to the universal ribosomal protein uL24 family. In terms of assembly, part of the 50S ribosomal subunit.

In terms of biological role, one of two assembly initiator proteins, it binds directly to the 5'-end of the 23S rRNA, where it nucleates assembly of the 50S subunit. One of the proteins that surrounds the polypeptide exit tunnel on the outside of the subunit. The protein is Large ribosomal subunit protein uL24 of Vesicomyosocius okutanii subsp. Calyptogena okutanii (strain HA).